A 245-amino-acid chain; its full sequence is MNDWMPIAKEYDPLKAGSIDGTDEDPHDRAVWRAMLARYTPNKGVTGDPLLTLFVARLNLQTKEEKLKEVFSRYGDIRRLRLVRDLVTGFSKGYAFIEYKDERSLLKAYRDADGLVIDQHEIFVDYELERTLKGWIPRRLGGGLGGKKESGQLRFGGRDRPFRKPINLPVVKNDQFREGKRERRERSRSRERHWDSRMRDHHDRGREKRWQEREPARAWPEGDWERERDFRDDRVKGREKRDRSK.

Positions 51 to 129 (LTLFVARLNL…HEIFVDYELE (79 aa)) constitute an RRM domain. Basic and acidic residues predominate over residues 146–162 (GKKESGQLRFGGRDRPF). The segment at 146–165 (GKKESGQLRFGGRDRPFRKP) is disordered. Lys172 participates in a covalent cross-link: Glycyl lysine isopeptide (Lys-Gly) (interchain with G-Cter in SUMO2). Positions 173-222 (NDQFREGKRERRERSRSRERHWDSRMRDHHDRGREKRWQEREPARAWPEG) are disordered. Basic and acidic residues-rich tracts occupy residues 174 to 185 (DQFREGKRERRE) and 192 to 216 (RHWD…REPA).

Component of the U11/U12 snRNPs that are part of the U12-type spliceosome.

The protein localises to the nucleus. The protein is U11/U12 small nuclear ribonucleoprotein 35 kDa protein (SNRNP35) of Bos taurus (Bovine).